The primary structure comprises 186 residues: Casparian strip membrane protein 1 (186 aa).

Topologically, residues 1-26 (MKGGSIELGEVSKNASTNKGVKRGLS) are cytoplasmic. Residues 27 to 47 (IMDFILRIIAGVATLASAVAM) form a helical membrane-spanning segment. Residues 48–72 (GTTDERLPFATSFVQFRAEYDDLPS) are Extracellular-facing. A helical transmembrane segment spans residues 73–93 (FVFFVLANSIVCGYLALSLIL). At 94–107 (SILHIVRSTAVKSR) the chain is on the cytoplasmic side. The chain crosses the membrane as a helical span at residues 108 to 128 (ILLIVLDMVMMGLLAAAASAA). Over 129–157 (ASIVYIAHYGNTQANWFPICQQYNSFCER) the chain is Extracellular. Residues 158 to 178 (ISGSLIGSYIAVALFIIIILL) form a helical membrane-spanning segment. Over 179-186 (SQSAISRN) the chain is Cytoplasmic.

This sequence belongs to the Casparian strip membrane proteins (CASP) family. Homodimer and heterodimers.

It localises to the cell membrane. Its function is as follows. Regulates membrane-cell wall junctions and localized cell wall deposition. Required for establishment of the Casparian strip membrane domain (CSD) and the subsequent formation of Casparian strips, a cell wall modification of the root endodermis that determines an apoplastic barrier between the intraorganismal apoplasm and the extraorganismal apoplasm and prevents lateral diffusion. In Medicago truncatula (Barrel medic), this protein is Casparian strip membrane protein 1.